The primary structure comprises 185 residues: Orotate phosphoribosyltransferase (185 aa).

5-phospho-alpha-D-ribose 1-diphosphate contacts are provided by residues R94, K95, K98, H100, and 120-128; that span reads EDVTTTGGS. Orotate-binding residues include T124 and R152.

The protein belongs to the purine/pyrimidine phosphoribosyltransferase family. PyrE subfamily. In terms of assembly, homodimer. It depends on Mg(2+) as a cofactor.

It carries out the reaction orotidine 5'-phosphate + diphosphate = orotate + 5-phospho-alpha-D-ribose 1-diphosphate. It functions in the pathway pyrimidine metabolism; UMP biosynthesis via de novo pathway; UMP from orotate: step 1/2. Its function is as follows. Catalyzes the transfer of a ribosyl phosphate group from 5-phosphoribose 1-diphosphate to orotate, leading to the formation of orotidine monophosphate (OMP). This chain is Orotate phosphoribosyltransferase, found in Thermococcus kodakarensis (strain ATCC BAA-918 / JCM 12380 / KOD1) (Pyrococcus kodakaraensis (strain KOD1)).